A 181-amino-acid chain; its full sequence is Ribonuclease HII (181 aa).

The RNase H type-2 domain maps to 1–181; it reads MICGIDEVGR…NLHRRSFKFI (181 aa). A divalent metal cation-binding residues include aspartate 6, glutamate 7, and aspartate 98.

Belongs to the RNase HII family. Requires Mn(2+) as cofactor. Mg(2+) serves as cofactor.

The protein localises to the cytoplasm. It catalyses the reaction Endonucleolytic cleavage to 5'-phosphomonoester.. Endonuclease that specifically degrades the RNA of RNA-DNA hybrids. The protein is Ribonuclease HII of Borrelia hermsii (strain HS1 / DAH).